Reading from the N-terminus, the 502-residue chain is Alpha-ketoglutarate-dependent dioxygenase FTO (502 aa).

The fe2OG dioxygenase domain stretch occupies residues 32–324 (TPKDDEFYQQ…SSTHRVAECS (293 aa)). Residues R96 and Y108 each coordinate substrate. N202 serves as a coordination point for 2-oxoglutarate. The interval 210–221 (PYLKEEPYFGMG) is loop L1; predicted to block binding of double-stranded DNA or RNA. K213 bears the N6-acetyllysine mark. 2 residues coordinate Fe cation: H228 and D230. 228-231 (HHDE) lines the substrate pocket. Y292 is a 2-oxoglutarate binding site. Residue H304 coordinates Fe cation. Residues 313-315 (RFS), T317, and R319 each bind 2-oxoglutarate.

This sequence belongs to the fto family. As to quaternary structure, monomer. May also exist as homodimer. The cofactor is Fe(2+). Ubiquitous. Detected in brain, brain cortex, hypothalamus, cerebellum, liver, pancreas, heart, kidney, white adipose tissue and skeletal muscle. Most abundant in the brain, particularly in hypothalamic nuclei governing energy balance.

The protein resides in the nucleus. The protein localises to the nucleus speckle. It is found in the cytoplasm. It carries out the reaction a 5'-end (N(7)-methyl 5'-triphosphoguanosine)-(N(6),2'-O-dimethyladenosine) in mRNA + 2-oxoglutarate + O2 = a 5'-end (N(7)-methyl 5'-triphosphoguanosine)-(2'-O-methyladenosine) in mRNA + formaldehyde + succinate + CO2. The enzyme catalyses an N(6)-methyladenosine in mRNA + 2-oxoglutarate + O2 = an adenosine in mRNA + formaldehyde + succinate + CO2. The catalysed reaction is N(6)-methyladenosine in U6 snRNA + 2-oxoglutarate + O2 = adenosine in U6 snRNA + formaldehyde + succinate + CO2. It catalyses the reaction a 5'-end (N(7)-methyl 5'-triphosphoguanosine)-(N(6),2'-O-dimethyladenosine) in U6 snRNA + 2-oxoglutarate + O2 = a 5'-end (N(7)-methyl 5'-triphosphoguanosine)-(2'-O-methyladenosine) in U6 snRNA + formaldehyde + succinate + CO2. It carries out the reaction an N(1)-methyladenosine in tRNA + 2-oxoglutarate + O2 = an adenosine in tRNA + formaldehyde + succinate + CO2. Activated by ascorbate. Inhibited by N-oxalylglycine, fumarate and succinate. RNA demethylase that mediates oxidative demethylation of different RNA species, such as mRNAs, tRNAs and snRNAs, and acts as a regulator of fat mass, adipogenesis and energy homeostasis. Specifically demethylates N(6)-methyladenosine (m6A) RNA, the most prevalent internal modification of messenger RNA (mRNA) in higher eukaryotes. M6A demethylation by FTO affects mRNA expression and stability. Also able to demethylate m6A in U6 small nuclear RNA (snRNA). Mediates demethylation of N(6),2'-O-dimethyladenosine cap (m6A(m)), by demethylating the N(6)-methyladenosine at the second transcribed position of mRNAs and U6 snRNA. Demethylation of m6A(m) in the 5'-cap by FTO affects mRNA stability by promoting susceptibility to decapping. Also acts as a tRNA demethylase by removing N(1)-methyladenine from various tRNAs. Has no activity towards 1-methylguanine. Has no detectable activity towards double-stranded DNA. Also able to repair alkylated DNA and RNA by oxidative demethylation: demethylates single-stranded RNA containing 3-methyluracil, single-stranded DNA containing 3-methylthymine and has low demethylase activity towards single-stranded DNA containing 1-methyladenine or 3-methylcytosine. Ability to repair alkylated DNA and RNA is however unsure in vivo. Involved in the regulation of fat mass, adipogenesis and body weight, thereby contributing to the regulation of body size and body fat accumulation. Involved in the regulation of thermogenesis and the control of adipocyte differentiation into brown or white fat cells. Regulates activity of the dopaminergic midbrain circuitry via its ability to demethylate m6A in mRNAs. The polypeptide is Alpha-ketoglutarate-dependent dioxygenase FTO (Mus musculus (Mouse)).